The following is a 175-amino-acid chain: uncharacterized protein (175 aa).

Over residues 1–17 the composition is skewed to basic and acidic residues; the sequence is MKVEGGESMHESEEGRD. Residues 1–21 form a disordered region; it reads MKVEGGESMHESEEGRDVPNG.

This is an uncharacterized protein from Bacillus thuringiensis subsp. kurstaki.